The following is a 411-amino-acid chain: DNA polymerase IV (411 aa).

Positions 18–211 (VVHVDMDCFY…LDVADLHGVG (194 aa)) constitute a UmuC domain. Mg(2+) contacts are provided by Asp-22 and Asp-130. Glu-131 is an active-site residue. Disordered regions lie at residues 248–280 (FHRRARGADSRPVEPRGKPKSLSRESSFDGATE) and 376–411 (GFSGDETGDGGGHEGGACGGAGRGSCGGQTTLDEFT). Over residues 253–274 (RGADSRPVEPRGKPKSLSRESS) the composition is skewed to basic and acidic residues. Residues 384 to 402 (DGGGHEGGACGGAGRGSCG) show a composition bias toward gly residues.

It belongs to the DNA polymerase type-Y family. In terms of assembly, monomer. Requires Mg(2+) as cofactor.

Its subcellular location is the cytoplasm. The enzyme catalyses DNA(n) + a 2'-deoxyribonucleoside 5'-triphosphate = DNA(n+1) + diphosphate. Poorly processive, error-prone DNA polymerase involved in untargeted mutagenesis. Copies undamaged DNA at stalled replication forks, which arise in vivo from mismatched or misaligned primer ends. These misaligned primers can be extended by PolIV. Exhibits no 3'-5' exonuclease (proofreading) activity. May be involved in translesional synthesis. The polypeptide is DNA polymerase IV (Halobacterium salinarum (strain ATCC 29341 / DSM 671 / R1)).